Reading from the N-terminus, the 455-residue chain is ATP-dependent protease ATPase subunit HslU (455 aa).

ATP is bound by residues I19, 61–66 (GVGKTE), D268, E333, and R405.

This sequence belongs to the ClpX chaperone family. HslU subfamily. A double ring-shaped homohexamer of HslV is capped on each side by a ring-shaped HslU homohexamer. The assembly of the HslU/HslV complex is dependent on binding of ATP.

The protein localises to the cytoplasm. In terms of biological role, ATPase subunit of a proteasome-like degradation complex; this subunit has chaperone activity. The binding of ATP and its subsequent hydrolysis by HslU are essential for unfolding of protein substrates subsequently hydrolyzed by HslV. HslU recognizes the N-terminal part of its protein substrates and unfolds these before they are guided to HslV for hydrolysis. The polypeptide is ATP-dependent protease ATPase subunit HslU (Francisella philomiragia subsp. philomiragia (strain ATCC 25017 / CCUG 19701 / FSC 153 / O#319-036)).